A 366-amino-acid polypeptide reads, in one-letter code: Actin-like protein 8 (366 aa).

Belongs to the actin family. In terms of tissue distribution, strongly expressed in testis and pancreas. Weak expression in placenta.

The protein resides in the cytoplasm. It is found in the cytoskeleton. This is Actin-like protein 8 (ACTL8) from Homo sapiens (Human).